The chain runs to 1166 residues: DEAD-box ATP-dependent RNA helicase 42 (1166 aa).

Basic and acidic residues-rich tracts occupy residues methionine 1–aspartate 12 and aspartate 21–arginine 45. The interval methionine 1 to aspartate 460 is disordered. Residues aspartate 14–arginine 95 adopt a coiled-coil conformation. Residues serine 59 to glutamate 70 show a composition bias toward acidic residues. Residues glutamate 80 to arginine 95 are compositionally biased toward basic residues. Over residues serine 101–glutamate 110 the composition is skewed to acidic residues. Residues arginine 111 to glycine 206 show a composition bias toward basic and acidic residues. The stretch at arginine 130–glutamate 302 forms a coiled coil. A Phosphoserine modification is found at serine 210. The segment covering glutamate 224–alanine 314 has biased composition (basic and acidic residues). At serine 324 the chain carries Phosphoserine. Composition is skewed to basic and acidic residues over residues glutamate 344–aspartate 357 and methionine 416–lysine 426. The Q motif signature appears at lysine 529–threonine 557. Positions leucine 560–isoleucine 738 constitute a Helicase ATP-binding domain. Alanine 573–threonine 580 contacts ATP. A DEAD box motif is present at residues aspartate 686–aspartate 689. A Helicase C-terminal domain is found at aspartate 749–alanine 910.

Belongs to the DEAD box helicase family. DDX46/PRP5 subfamily.

It is found in the nucleus. The enzyme catalyses ATP + H2O = ADP + phosphate + H(+). Functionally, helicase required for pre-mRNA splicing, cold-responsive gene regulation and cold tolerance. The sequence is that of DEAD-box ATP-dependent RNA helicase 42 (RH42) from Arabidopsis thaliana (Mouse-ear cress).